The following is a 350-amino-acid chain: S-adenosylmethionine:tRNA ribosyltransferase-isomerase (350 aa).

This sequence belongs to the QueA family. In terms of assembly, monomer.

The protein resides in the cytoplasm. The catalysed reaction is 7-aminomethyl-7-carbaguanosine(34) in tRNA + S-adenosyl-L-methionine = epoxyqueuosine(34) in tRNA + adenine + L-methionine + 2 H(+). It functions in the pathway tRNA modification; tRNA-queuosine biosynthesis. Its function is as follows. Transfers and isomerizes the ribose moiety from AdoMet to the 7-aminomethyl group of 7-deazaguanine (preQ1-tRNA) to give epoxyqueuosine (oQ-tRNA). The chain is S-adenosylmethionine:tRNA ribosyltransferase-isomerase from Vibrio campbellii (strain ATCC BAA-1116).